The following is a 255-amino-acid chain: Adenosylcobinamide-GDP ribazoletransferase (255 aa).

6 helical membrane passes run 24–44 (LIAY…SLYV), 45–65 (AIYG…IYIV), 98–118 (VGAG…ISLS), 122–142 (LYIG…MMMI), 164–184 (KHDS…ALLS), and 187–207 (SIMI…MAVI).

This sequence belongs to the CobS family. Mg(2+) is required as a cofactor.

It is found in the cell membrane. The catalysed reaction is alpha-ribazole + adenosylcob(III)inamide-GDP = adenosylcob(III)alamin + GMP + H(+). It carries out the reaction alpha-ribazole 5'-phosphate + adenosylcob(III)inamide-GDP = adenosylcob(III)alamin 5'-phosphate + GMP + H(+). Its pathway is cofactor biosynthesis; adenosylcobalamin biosynthesis; adenosylcobalamin from cob(II)yrinate a,c-diamide: step 7/7. In terms of biological role, joins adenosylcobinamide-GDP and alpha-ribazole to generate adenosylcobalamin (Ado-cobalamin). Also synthesizes adenosylcobalamin 5'-phosphate from adenosylcobinamide-GDP and alpha-ribazole 5'-phosphate. The sequence is that of Adenosylcobinamide-GDP ribazoletransferase from Thermoplasma acidophilum (strain ATCC 25905 / DSM 1728 / JCM 9062 / NBRC 15155 / AMRC-C165).